We begin with the raw amino-acid sequence, 489 residues long: Dihydropyrimidinase 1 (489 aa).

Residues His61, His63, and Lys156 each coordinate Zn(2+). An N6-carboxylysine modification is found at Lys156. Tyr161 lines the substrate pocket. Positions 189 and 245 each coordinate Zn(2+). Ser295 contacts substrate. Asp323 contacts Zn(2+). Position 344 (Asn344) interacts with substrate.

Belongs to the metallo-dependent hydrolases superfamily. Hydantoinase/dihydropyrimidinase family. As to quaternary structure, homotetramer. Zn(2+) is required as a cofactor. Carboxylation allows a single lysine to coordinate two zinc ions. In L1-L2 larvae, expressed in body hypodermal cells, hemidesmosomes and in a neuronal cell between the pharynx and ring neuropil. In adults, expression is seen in body hypodermal cells and pharynx.

The protein resides in the nucleus. The catalysed reaction is 5,6-dihydrouracil + H2O = 3-(carbamoylamino)propanoate + H(+). The chain is Dihydropyrimidinase 1 (dhp-1) from Caenorhabditis elegans.